A 501-amino-acid chain; its full sequence is Bifunctional purine biosynthesis protein PurH (501 aa).

Residues 1-144 enclose the MGS-like domain; that stretch reads MKKRALISVF…KNFQDVVVIS (144 aa).

This sequence belongs to the PurH family.

It carries out the reaction (6R)-10-formyltetrahydrofolate + 5-amino-1-(5-phospho-beta-D-ribosyl)imidazole-4-carboxamide = 5-formamido-1-(5-phospho-D-ribosyl)imidazole-4-carboxamide + (6S)-5,6,7,8-tetrahydrofolate. The catalysed reaction is IMP + H2O = 5-formamido-1-(5-phospho-D-ribosyl)imidazole-4-carboxamide. It functions in the pathway purine metabolism; IMP biosynthesis via de novo pathway; 5-formamido-1-(5-phospho-D-ribosyl)imidazole-4-carboxamide from 5-amino-1-(5-phospho-D-ribosyl)imidazole-4-carboxamide (10-formyl THF route): step 1/1. The protein operates within purine metabolism; IMP biosynthesis via de novo pathway; IMP from 5-formamido-1-(5-phospho-D-ribosyl)imidazole-4-carboxamide: step 1/1. The sequence is that of Bifunctional purine biosynthesis protein PurH from Clostridium botulinum (strain Eklund 17B / Type B).